The following is a 445-amino-acid chain: 3-phosphoshikimate 1-carboxyvinyltransferase (445 aa).

Lysine 21, serine 22, and arginine 26 together coordinate 3-phosphoshikimate. A phosphoenolpyruvate-binding site is contributed by lysine 21. Phosphoenolpyruvate-binding residues include glycine 92 and arginine 120. 3-phosphoshikimate-binding residues include serine 165, glutamine 166, aspartate 307, and lysine 334. Glutamine 166 lines the phosphoenolpyruvate pocket. The active-site Proton acceptor is the aspartate 307. 3 residues coordinate phosphoenolpyruvate: arginine 338, arginine 379, and lysine 405.

Belongs to the EPSP synthase family. Monomer.

It is found in the cytoplasm. It carries out the reaction 3-phosphoshikimate + phosphoenolpyruvate = 5-O-(1-carboxyvinyl)-3-phosphoshikimate + phosphate. It functions in the pathway metabolic intermediate biosynthesis; chorismate biosynthesis; chorismate from D-erythrose 4-phosphate and phosphoenolpyruvate: step 6/7. In terms of biological role, catalyzes the transfer of the enolpyruvyl moiety of phosphoenolpyruvate (PEP) to the 5-hydroxyl of shikimate-3-phosphate (S3P) to produce enolpyruvyl shikimate-3-phosphate and inorganic phosphate. The chain is 3-phosphoshikimate 1-carboxyvinyltransferase from Chlamydia felis (strain Fe/C-56) (Chlamydophila felis).